The following is a 367-amino-acid chain: Dihydroorotate dehydrogenase (quinone) (367 aa).

Residues 67 to 71 (AGFDK) and Thr91 each bind FMN. Position 71 (Lys71) interacts with substrate. 116-120 (NRLGF) is a substrate binding site. Residues Asn145 and Asn178 each coordinate FMN. Position 178 (Asn178) interacts with substrate. Residue Ser181 is the Nucleophile of the active site. Position 183 (Asn183) interacts with substrate. The FMN site is built by Lys219 and Thr247. 248 to 249 (NT) is a binding site for substrate. FMN-binding positions include Gly269, Gly298, and 319 to 320 (YT).

This sequence belongs to the dihydroorotate dehydrogenase family. Type 2 subfamily. As to quaternary structure, monomer. Requires FMN as cofactor.

Its subcellular location is the cell membrane. It catalyses the reaction (S)-dihydroorotate + a quinone = orotate + a quinol. Its pathway is pyrimidine metabolism; UMP biosynthesis via de novo pathway; orotate from (S)-dihydroorotate (quinone route): step 1/1. In terms of biological role, catalyzes the conversion of dihydroorotate to orotate with quinone as electron acceptor. The protein is Dihydroorotate dehydrogenase (quinone) of Roseiflexus castenholzii (strain DSM 13941 / HLO8).